The chain runs to 517 residues: Protein AGENET DOMAIN (AGD)-CONTAINING P1 (517 aa).

The tract at residues 1–35 (MLRPRRSLGVSSPAKQRKKAAPKNSMATRANRKRL) is disordered. Plant Agenet, chromatin-binding stretches follow at residues 37–111 (SYLK…PPMS) and 117–173 (KKIV…EWVD). Residues 177–202 (KPPLEETEEEEDESEEDKLDDSEDEE) form a disordered region. Residues 181-202 (EETEEEEDESEEDKLDDSEDEE) are compositionally biased toward acidic residues. Plant Agenet, chromatin-binding regions lie at residues 219–287 (QMFS…PRDE), 289–345 (IDFA…DWVD), 378–446 (QAFS…LESV), and 449–505 (SPFE…EWID).

Expressed ubiquitously during vegetative stage, in meristems (e.g. root tips and shoot apical meristem), and in ovules and young seeds during reproductive stage.

It is found in the nucleus. Functionally, heterochromatin-binding protein that preferentially occupies long transposons and specifically recognizes the histone H3 'Lys-9' methylation (H3K9me) marks, with a stronger affinity for dimethylated H3K9 (H3K9me2). Required for transcriptional silencing, non-CG DNA methylation (e.g. CHG and CHH regions), and H3K9 dimethylation (H3K9me2) at some loci. Mediates heterochromatin phase separation and chromocenter formation. The polypeptide is Protein AGENET DOMAIN (AGD)-CONTAINING P1 (Arabidopsis thaliana (Mouse-ear cress)).